Here is a 504-residue protein sequence, read N- to C-terminus: O-fucosyltransferase 39 (504 aa).

A helical; Signal-anchor for type II membrane protein membrane pass occupies residues 11 to 27; that stretch reads WILSMFFFVVLFCNNVS. N115 is a glycosylation site (N-linked (GlcNAc...) asparagine). 288–290 serves as a coordination point for substrate; it reads HLR. Residues N359 and N460 are each glycosylated (N-linked (GlcNAc...) asparagine).

The protein belongs to the glycosyltransferase GT106 family.

The protein localises to the membrane. It functions in the pathway glycan metabolism. This Arabidopsis thaliana (Mouse-ear cress) protein is O-fucosyltransferase 39.